A 465-amino-acid chain; its full sequence is Poly(A) polymerase I (465 aa).

Active-site residues include Asp-80, Asp-82, and Asp-162. Positions Ala-430–Val-465 are disordered. Over residues Arg-448–Pro-459 the composition is skewed to basic residues.

This sequence belongs to the tRNA nucleotidyltransferase/poly(A) polymerase family.

It carries out the reaction RNA(n) + ATP = RNA(n)-3'-adenine ribonucleotide + diphosphate. Functionally, adds poly(A) tail to the 3' end of many RNAs, which usually targets these RNAs for decay. Plays a significant role in the global control of gene expression, through influencing the rate of transcript degradation, and in the general RNA quality control. This Salmonella typhimurium (strain LT2 / SGSC1412 / ATCC 700720) protein is Poly(A) polymerase I.